We begin with the raw amino-acid sequence, 292 residues long: Probable E3 ubiquitin-protein ligase RNF144A (292 aa).

The tract at residues 16–236 is TRIAD supradomain; it reads PLVSCKLCLG…YDKGPCRNKL (221 aa). Residues C20, C23, C43, C46, C111, C116, C135, C138, C143, C146, H151, C156, C185, and C188 each contribute to the Zn(2+) site. Residues 20-70 form an RING-type 1 zinc finger; that stretch reads CKLCLGEYTVEQMTTIAQCQCIFCTLCLKQYVELLIKEGLETAISCPDASC. The IBR-type zinc-finger motif lies at 91-156; it reads QKYKKLQFEK…KANWHPGQGC (66 aa). The RING-type 2; atypical zinc-finger motif lies at 185 to 214; that stretch reads CPKCKVYIERDEGCAQMMCKNCKHAFCWYC. C198 is an active-site residue. Zn(2+)-binding residues include C203, C206, C211, C214, H226, and C232. The chain crosses the membrane as a helical span at residues 250 to 270; sequence VVGIFAGFGLLLLVASPFLLL.

The protein belongs to the RBR family. RNF144 subfamily.

Its subcellular location is the membrane. It carries out the reaction [E2 ubiquitin-conjugating enzyme]-S-ubiquitinyl-L-cysteine + [acceptor protein]-L-lysine = [E2 ubiquitin-conjugating enzyme]-L-cysteine + [acceptor protein]-N(6)-ubiquitinyl-L-lysine.. It participates in protein modification; protein ubiquitination. E3 ubiquitin-protein ligase which accepts ubiquitin from E2 ubiquitin-conjugating enzymes ube2l3 and ube2l6 in the form of a thioester and then directly transfers the ubiquitin to targeted substrates. The chain is Probable E3 ubiquitin-protein ligase RNF144A (rnf144a) from Xenopus tropicalis (Western clawed frog).